Here is a 431-residue protein sequence, read N- to C-terminus: Histidinol dehydrogenase (431 aa).

Tyr130, Gln191, and Asn214 together coordinate NAD(+). Substrate is bound by residues Ser237, Gln259, and His262. Residues Gln259 and His262 each contribute to the Zn(2+) site. Catalysis depends on proton acceptor residues Glu327 and His328. Substrate is bound by residues His328, Asp361, Glu415, and His420. Asp361 serves as a coordination point for Zn(2+). His420 is a Zn(2+) binding site.

This sequence belongs to the histidinol dehydrogenase family. Zn(2+) serves as cofactor.

It catalyses the reaction L-histidinol + 2 NAD(+) + H2O = L-histidine + 2 NADH + 3 H(+). The protein operates within amino-acid biosynthesis; L-histidine biosynthesis; L-histidine from 5-phospho-alpha-D-ribose 1-diphosphate: step 9/9. Catalyzes the sequential NAD-dependent oxidations of L-histidinol to L-histidinaldehyde and then to L-histidine. The polypeptide is Histidinol dehydrogenase (Bradyrhizobium diazoefficiens (strain JCM 10833 / BCRC 13528 / IAM 13628 / NBRC 14792 / USDA 110)).